A 466-amino-acid polypeptide reads, in one-letter code: tRNA dimethylallyltransferase 2 (466 aa).

27 to 34 contacts ATP; sequence GPTGSGKS. 29–34 lines the substrate pocket; the sequence is TGSGKS. An interaction with substrate tRNA region spans residues 52 to 55; that stretch reads DAMQ. A disordered region spans residues 433-466; sequence WEHHKQGRTHRKRTTRHKNSQTYKNREVQEAEVN. Over residues 437 to 451 the composition is skewed to basic residues; it reads KQGRTHRKRTTRHKN. The span at 456 to 466 shows a compositional bias: basic and acidic residues; the sequence is KNREVQEAEVN.

Belongs to the IPP transferase family. The cofactor is Mg(2+). In terms of tissue distribution, expressed ubiquitously, with highest expression in proliferating tissues.

The protein localises to the cytoplasm. The enzyme catalyses adenosine(37) in tRNA + dimethylallyl diphosphate = N(6)-dimethylallyladenosine(37) in tRNA + diphosphate. Functionally, catalyzes the transfer of a dimethylallyl group onto the adenine at position 37 in tRNAs that read codons beginning with uridine, leading to the formation of N6-(dimethylallyl)adenosine (i(6)A). Involved in the cis-type cytokinin biosynthesis. This is tRNA dimethylallyltransferase 2 (IPT2) from Arabidopsis thaliana (Mouse-ear cress).